Reading from the N-terminus, the 207-residue chain is Imidazole glycerol phosphate synthase subunit HisH (207 aa).

Positions 1-206 (MMIVIDYDAG…KEYVYENTAR (206 aa)) constitute a Glutamine amidotransferase type-1 domain. Cys79 functions as the Nucleophile in the catalytic mechanism. Active-site residues include His181 and Glu183.

In terms of assembly, heterodimer of HisH and HisF.

The protein resides in the cytoplasm. It catalyses the reaction 5-[(5-phospho-1-deoxy-D-ribulos-1-ylimino)methylamino]-1-(5-phospho-beta-D-ribosyl)imidazole-4-carboxamide + L-glutamine = D-erythro-1-(imidazol-4-yl)glycerol 3-phosphate + 5-amino-1-(5-phospho-beta-D-ribosyl)imidazole-4-carboxamide + L-glutamate + H(+). It carries out the reaction L-glutamine + H2O = L-glutamate + NH4(+). It participates in amino-acid biosynthesis; L-histidine biosynthesis; L-histidine from 5-phospho-alpha-D-ribose 1-diphosphate: step 5/9. Its function is as follows. IGPS catalyzes the conversion of PRFAR and glutamine to IGP, AICAR and glutamate. The HisH subunit catalyzes the hydrolysis of glutamine to glutamate and ammonia as part of the synthesis of IGP and AICAR. The resulting ammonia molecule is channeled to the active site of HisF. The polypeptide is Imidazole glycerol phosphate synthase subunit HisH (Streptococcus sanguinis (strain SK36)).